We begin with the raw amino-acid sequence, 263 residues long: MTKNNEGFTHRNFAAVLQKYKYDLNLGDIVAGTIFSFELNGVLVDIGTPISAYLPIQEVSSNQDLNNFTSLNINDTREFFLLDYNIQSKQLILSIRRLEYIRAWKRIRQLLAEDSLLNVMIKGFNKGGMIINLEGISGFVPNSHLGNFQKSEQFNNKFIKLKLLNVEEKSNNLILSHRRALISQASSNLIVGNIIEGIINQITPYGLFIKVGNLKGLVHISEINIKNLEQISSQFKIGDTIKAVIIHVDKKQGRLSLSMKHLR.

S1 motif domains are found at residues 27–96 (GDIV…LSIR), 114–178 (DSLL…LSHR), and 192–260 (GNII…LSMK).

The protein belongs to the bacterial ribosomal protein bS1 family.

It is found in the plastid. The protein localises to the chloroplast. This is Small ribosomal subunit protein bS1c (rps1) from Pyropia yezoensis (Susabi-nori).